Reading from the N-terminus, the 493-residue chain is Glutamyl-tRNA(Gln) amidotransferase subunit A (493 aa).

Residues K78 and S158 each act as charge relay system in the active site. The Acyl-ester intermediate role is filled by S182.

This sequence belongs to the amidase family. GatA subfamily. As to quaternary structure, heterotrimer of A, B and C subunits.

The enzyme catalyses L-glutamyl-tRNA(Gln) + L-glutamine + ATP + H2O = L-glutaminyl-tRNA(Gln) + L-glutamate + ADP + phosphate + H(+). In terms of biological role, allows the formation of correctly charged Gln-tRNA(Gln) through the transamidation of misacylated Glu-tRNA(Gln) in organisms which lack glutaminyl-tRNA synthetase. The reaction takes place in the presence of glutamine and ATP through an activated gamma-phospho-Glu-tRNA(Gln). This Rickettsia bellii (strain OSU 85-389) protein is Glutamyl-tRNA(Gln) amidotransferase subunit A.